The sequence spans 159 residues: UPF0260 protein Avi_1324 (159 aa).

This sequence belongs to the UPF0260 family.

This Allorhizobium ampelinum (strain ATCC BAA-846 / DSM 112012 / S4) (Agrobacterium vitis (strain S4)) protein is UPF0260 protein Avi_1324.